A 379-amino-acid chain; its full sequence is MRLETMKQTPSSPVNIAMQDSFGCAVENRFQQLLDDESDPLDFLYQSAVEVTHRKKKEEGAAKKNANQKSGKKESQKDRKAVVVGGSTDVKVTQQTGQKRAPKNTEKVTQNENVDSQVKVDRTERRTAFREVRPNIMDRSAEYSIEKPMEIMDQDKQMRNYGGRGGMRGRGRGGFPRNTESDNLRGKREFDRHSGSDRARMRPEDKRGGSGPRNWGSIKEAFSEIEAVPVEEQVETTETEATEEHGKVSEETNDDGFSQEMSLDEWKLLQDQNRSKTELNLRKPETSVPSKAVVIHKSKYKNNISENEEESQYCFRKPVNDITAQLDINFGSLARPSRGRGGGGGRGRVRREEAFPHDVINVLADAPNPDDPEDFPALA.

Disordered stretches follow at residues 52-260 (THRK…FSQE) and 332-379 (SLAR…PALA). The segment covering 71 to 81 (GKKESQKDRKA) has biased composition (basic and acidic residues). Positions 107 to 116 (KVTQNENVDS) are enriched in polar residues. Basic and acidic residues-rich tracts occupy residues 118–133 (VKVD…REVR) and 139–158 (RSAE…DKQM). Over residues 162-174 (GGRGGMRGRGRGG) the composition is skewed to gly residues. A compositionally biased stretch (basic and acidic residues) spans 179–208 (TESDNLRGKREFDRHSGSDRARMRPEDKRG). 2 stretches are compositionally biased toward acidic residues: residues 232-241 (EQVETTETEA) and 368-379 (NPDDPEDFPALA).

Belongs to the SERBP1-HABP4 family. As to quaternary structure, associates with ribosomes; promoting ribosome stabilization. Interacts with eef2/eEF2; promoting ribosome stabilization.

Its subcellular location is the nucleus. The protein localises to the cytoplasm. It localises to the stress granule. It is found in the nucleolus. The protein resides in the nucleus speckle. Its subcellular location is the cajal body. In terms of biological role, ribosome-binding protein that promotes ribosome hibernation, a process during which ribosomes are stabilized in an inactive state and preserved from proteasomal degradation. Acts via its association with eef2/eEF2 factor at the A-site of the ribosome, promoting ribosome stabilization in an inactive state compatible with storage. Plays a key role in ribosome hibernation in the mature egg by promoting ribosome stabilization. Ribosomes, which are produced in large quantities during oogenesis, are stored and translationally repressed in the egg and early embryo. The chain is Intracellular hyaluronan-binding protein 4.S from Xenopus laevis (African clawed frog).